A 179-amino-acid polypeptide reads, in one-letter code: Hypoxanthine-guanine phosphoribosyltransferase (179 aa).

Diphosphate-binding residues include Lys42 and Gly43. Mg(2+) contacts are provided by Glu98 and Asp99. The active-site Proton acceptor is Glu102. GMP contacts are provided by residues Lys130, 151–152 (FV), and Asp158. Diphosphate is bound at residue Arg164.

It belongs to the purine/pyrimidine phosphoribosyltransferase family. The cofactor is Mg(2+).

The protein localises to the cytoplasm. It carries out the reaction IMP + diphosphate = hypoxanthine + 5-phospho-alpha-D-ribose 1-diphosphate. The enzyme catalyses GMP + diphosphate = guanine + 5-phospho-alpha-D-ribose 1-diphosphate. The protein operates within purine metabolism; IMP biosynthesis via salvage pathway; IMP from hypoxanthine: step 1/1. It functions in the pathway purine metabolism; GMP biosynthesis via salvage pathway; GMP from guanine: step 1/1. Purine salvage pathway enzyme that catalyzes the transfer of the ribosyl-5-phosphate group from 5-phospho-alpha-D-ribose 1-diphosphate (PRPP) to the N9 position of the 6-oxopurines hypoxanthine and guanine to form the corresponding ribonucleotides IMP (inosine 5'-monophosphate) and GMP (guanosine 5'-monophosphate), with the release of PPi. This Staphylococcus aureus (strain COL) protein is Hypoxanthine-guanine phosphoribosyltransferase (hpt).